Consider the following 204-residue polypeptide: Holliday junction branch migration complex subunit RuvA (204 aa).

Residues Met1–Phe67 are domain I. A domain II region spans residues Thr68–Gln149. The segment at Thr150–Thr154 is flexible linker. Positions Ile155–Leu204 are domain III.

It belongs to the RuvA family. In terms of assembly, homotetramer. Forms an RuvA(8)-RuvB(12)-Holliday junction (HJ) complex. HJ DNA is sandwiched between 2 RuvA tetramers; dsDNA enters through RuvA and exits via RuvB. An RuvB hexamer assembles on each DNA strand where it exits the tetramer. Each RuvB hexamer is contacted by two RuvA subunits (via domain III) on 2 adjacent RuvB subunits; this complex drives branch migration. In the full resolvosome a probable DNA-RuvA(4)-RuvB(12)-RuvC(2) complex forms which resolves the HJ.

Its subcellular location is the cytoplasm. In terms of biological role, the RuvA-RuvB-RuvC complex processes Holliday junction (HJ) DNA during genetic recombination and DNA repair, while the RuvA-RuvB complex plays an important role in the rescue of blocked DNA replication forks via replication fork reversal (RFR). RuvA specifically binds to HJ cruciform DNA, conferring on it an open structure. The RuvB hexamer acts as an ATP-dependent pump, pulling dsDNA into and through the RuvAB complex. HJ branch migration allows RuvC to scan DNA until it finds its consensus sequence, where it cleaves and resolves the cruciform DNA. The sequence is that of Holliday junction branch migration complex subunit RuvA from Endomicrobium trichonymphae.